Consider the following 549-residue polypeptide: Glucose-6-phosphate isomerase (549 aa).

Residue Glu-353 is the Proton donor of the active site. Catalysis depends on residues His-384 and Lys-513.

It belongs to the GPI family.

Its subcellular location is the cytoplasm. The catalysed reaction is alpha-D-glucose 6-phosphate = beta-D-fructose 6-phosphate. It functions in the pathway carbohydrate biosynthesis; gluconeogenesis. It participates in carbohydrate degradation; glycolysis; D-glyceraldehyde 3-phosphate and glycerone phosphate from D-glucose: step 2/4. In terms of biological role, catalyzes the reversible isomerization of glucose-6-phosphate to fructose-6-phosphate. In Brucella canis (strain ATCC 23365 / NCTC 10854 / RM-666), this protein is Glucose-6-phosphate isomerase.